Consider the following 102-residue polypeptide: Small ribosomal subunit protein uS10 (102 aa).

It belongs to the universal ribosomal protein uS10 family. Part of the 30S ribosomal subunit.

In terms of biological role, involved in the binding of tRNA to the ribosomes. In Chelativorans sp. (strain BNC1), this protein is Small ribosomal subunit protein uS10.